The following is a 238-amino-acid chain: ATP synthase subunit O, mitochondrial (238 aa).

The N-terminal 36 residues, 1–36 (MANRFRSGISFFKTIAVTDSVSSVRSKSLFPALRTY), are a transit peptide targeting the mitochondrion. Residue Thr90 is modified to Phosphothreonine.

The protein belongs to the ATPase delta chain family. In terms of assembly, F-type ATPases have 2 components, CF(1) - the catalytic core - and CF(0) - the membrane proton channel. CF(1) has five subunits: alpha(3), beta(3), gamma(1), delta(1), epsilon(1). CF(0) has three main subunits: a, b and c.

It localises to the mitochondrion. Its subcellular location is the mitochondrion inner membrane. Mitochondrial membrane ATP synthase (F(1)F(0) ATP synthase or Complex V) produces ATP from ADP in the presence of a proton gradient across the membrane which is generated by electron transport complexes of the respiratory chain. F-type ATPases consist of two structural domains, F(1) - containing the extramembraneous catalytic core and F(0) - containing the membrane proton channel, linked together by a central stalk and a peripheral stalk. During catalysis, ATP synthesis in the catalytic domain of F(1) is coupled via a rotary mechanism of the central stalk subunits to proton translocation. Part of the complex F(0) domain and the peripheric stalk, which acts as a stator to hold the catalytic alpha(3)beta(3) subcomplex and subunit a/ATP6 static relative to the rotary elements. The chain is ATP synthase subunit O, mitochondrial from Arabidopsis thaliana (Mouse-ear cress).